Here is a 188-residue protein sequence, read N- to C-terminus: Adenine phosphoribosyltransferase (188 aa).

It belongs to the purine/pyrimidine phosphoribosyltransferase family. Homodimer.

It is found in the cytoplasm. It carries out the reaction AMP + diphosphate = 5-phospho-alpha-D-ribose 1-diphosphate + adenine. It participates in purine metabolism; AMP biosynthesis via salvage pathway; AMP from adenine: step 1/1. Catalyzes a salvage reaction resulting in the formation of AMP, that is energically less costly than de novo synthesis. The sequence is that of Adenine phosphoribosyltransferase from Salinispora tropica (strain ATCC BAA-916 / DSM 44818 / JCM 13857 / NBRC 105044 / CNB-440).